The sequence spans 167 residues: MNNKHPENKAKSTTTPKTIALNKRARHEYHLIERHEAGLELQGWEVKAIRAGRANLADGYAYVRDGEIFLIGAQITPLIQASTHVVANDRRTRKLLLHRRQIDTLIGRVQREGFTLVPTAMYWSKNRVKMEIALAKGKQAHDKRHAEKEREWQRDKQRIMRAHNRNA.

The disordered stretch occupies residues 139–167 (QAHDKRHAEKEREWQRDKQRIMRAHNRNA). The segment covering 144–158 (RHAEKEREWQRDKQR) has biased composition (basic and acidic residues).

The protein belongs to the SmpB family.

The protein localises to the cytoplasm. In terms of biological role, required for rescue of stalled ribosomes mediated by trans-translation. Binds to transfer-messenger RNA (tmRNA), required for stable association of tmRNA with ribosomes. tmRNA and SmpB together mimic tRNA shape, replacing the anticodon stem-loop with SmpB. tmRNA is encoded by the ssrA gene; the 2 termini fold to resemble tRNA(Ala) and it encodes a 'tag peptide', a short internal open reading frame. During trans-translation Ala-aminoacylated tmRNA acts like a tRNA, entering the A-site of stalled ribosomes, displacing the stalled mRNA. The ribosome then switches to translate the ORF on the tmRNA; the nascent peptide is terminated with the 'tag peptide' encoded by the tmRNA and targeted for degradation. The ribosome is freed to recommence translation, which seems to be the essential function of trans-translation. This is SsrA-binding protein from Xylella fastidiosa (strain 9a5c).